We begin with the raw amino-acid sequence, 550 residues long: M-phase inducer phosphatase 1-B (550 aa).

Disordered stretches follow at residues 76-98 and 285-335; these read NLGDETAPLPTESPDRISSGKVE and SPSM…QRRG. Over residues 290 to 310 the composition is skewed to basic and acidic residues; that stretch reads EKLDRPMLKRPVRPLDSETPV. The span at 322 to 335 shows a compositional bias: polar residues; that stretch reads LQPQEENFQPQRRG. The Rhodanese domain maps to 401 to 508; that stretch reads LVEKIFIIDC…FFPEYKELCE (108 aa). The active site involves Cys-457.

Belongs to the MPI phosphatase family.

It catalyses the reaction O-phospho-L-tyrosyl-[protein] + H2O = L-tyrosyl-[protein] + phosphate. In terms of biological role, tyrosine protein phosphatase which functions as a dosage-dependent inducer of mitotic progression. Directly dephosphorylates CDK1 and stimulates its kinase activity. This is M-phase inducer phosphatase 1-B (cdc25-1-b) from Xenopus laevis (African clawed frog).